Here is a 150-residue protein sequence, read N- to C-terminus: Nitric oxide reductase subunit C (150 aa).

A helical; Signal-anchor membrane pass occupies residues 13 to 29 (IFYGGSLFFFLLFAALT). Heme c is bound by residues C62, C65, and H66.

As to quaternary structure, heterodimer of cytochromes b (large subunit) and c (small subunit).

The protein resides in the cell membrane. In terms of biological role, component of the anaerobic respiratory chain that transforms nitrate to dinitrogen (denitrification). This chain is Nitric oxide reductase subunit C (norC), found in Halomonas halodenitrificans (Paracoccus halodenitrificans).